The following is a 41-amino-acid chain: Large ribosomal subunit protein bL36 (41 aa).

It belongs to the bacterial ribosomal protein bL36 family.

This is Large ribosomal subunit protein bL36 from Sphingopyxis alaskensis (strain DSM 13593 / LMG 18877 / RB2256) (Sphingomonas alaskensis).